The sequence spans 39 residues: TIINVKCTSPKQCLLPCKQIYGPHAGAKCMNGKCHCSKI.

3 disulfides stabilise this stretch: Cys-7-Cys-29, Cys-13-Cys-34, and Cys-17-Cys-36. Residue Ile-39 is modified to Isoleucine amide.

The protein belongs to the short scorpion toxin superfamily. Potassium channel inhibitor family. Alpha-KTx 02 subfamily. In terms of tissue distribution, expressed by the venom gland.

The protein resides in the secreted. Its function is as follows. Blocks human voltage-gated potassium channels Kv1.1/KCNA1 (IC(50)=4.8 nM) and Kv1.2/KCNA2 (IC(50)=2.9 nM). This chain is Potassium channel toxin alpha-KTx 2.17, found in Centruroides tecomanus (Scorpion).